The primary structure comprises 340 residues: Alcohol dehydrogenase (340 aa).

7 residues coordinate Zn(2+): Cys-37, His-58, Cys-89, Cys-92, Cys-95, Cys-103, and Cys-145.

This sequence belongs to the zinc-containing alcohol dehydrogenase family. The cofactor is Zn(2+).

The catalysed reaction is a primary alcohol + NAD(+) = an aldehyde + NADH + H(+). It catalyses the reaction a secondary alcohol + NAD(+) = a ketone + NADH + H(+). This is Alcohol dehydrogenase (adh) from Staphylococcus epidermidis (strain ATCC 35984 / DSM 28319 / BCRC 17069 / CCUG 31568 / BM 3577 / RP62A).